Here is a 113-residue protein sequence, read N- to C-terminus: U11-theraphotoxin-Hhn1a (113 aa).

An N-terminal signal peptide occupies residues 1-21 (MNTVRVTFLLVFVLAVSLGRA). A propeptide spanning residues 22 to 74 (DKEENRMEMQEKTEQGKSYLDFAENLLLQKLEELEAKLLEEDSEESRNSRQKR) is cleaved from the precursor. The interval 61–83 (EEDSEESRNSRQKRCIGEGVPCD) is disordered. Intrachain disulfides connect cysteine 75–cysteine 90, cysteine 82–cysteine 95, and cysteine 89–cysteine 110.

The protein belongs to the neurotoxin 14 (magi-1) family. 01 (HNTX-16) subfamily. In terms of tissue distribution, expressed by the venom gland.

The protein localises to the secreted. Probable ion channel inhibitor. The chain is U11-theraphotoxin-Hhn1a from Cyriopagopus hainanus (Chinese bird spider).